The chain runs to 628 residues: Pinene synthase, chloroplastic (628 aa).

The N-terminal 36 residues, M1–L36, are a transit peptide targeting the chloroplast. Residues D379, D383, and D531 each contribute to the Mg(2+) site. Residues D379–D383 carry the DDXXD motif motif.

Belongs to the terpene synthase family. Tpsd subfamily. The cofactor is Mg(2+). Mn(2+) is required as a cofactor. K(+) serves as cofactor.

Its subcellular location is the plastid. It localises to the chloroplast. It carries out the reaction (2E)-geranyl diphosphate = (1S,5S)-alpha-pinene + diphosphate. The catalysed reaction is (2E)-geranyl diphosphate = (1S,5S)-beta-pinene + diphosphate. It participates in terpene metabolism; oleoresin biosynthesis. Functionally, involved in defensive oleoresin formation in conifers in response to insect attack or other injury. Involved in monoterpene (C10) olefins biosynthesis. A mixture of alpha- and beta-pinene is produced by this enzyme. The polypeptide is Pinene synthase, chloroplastic (ag3) (Abies grandis (Grand fir)).